Reading from the N-terminus, the 563-residue chain is NAD(P)H-quinone oxidoreductase chain 4 (563 aa).

A run of 15 helical transmembrane segments spans residues 25–45, 56–76, 90–110, 111–131, 133–153, 157–177, 189–209, 230–250, 264–284, 298–318, 335–355, 356–376, 397–417, 438–458, and 485–505; these read FPWL…VPFI, WFAL…YLYG, VSWL…ISMP, LILL…PVTF, PKLF…VFAV, LLFF…LAIW, FIIY…AMGF, GFQL…LPIV, TAPV…YALM, FAPL…LTSF, MGFV…GAML, QMIS…ATYD, FALW…SGFV, IVIA…LLSM, and VYII…PRLM.

Belongs to the complex I subunit 4 family.

It is found in the cellular thylakoid membrane. The catalysed reaction is a plastoquinone + NADH + (n+1) H(+)(in) = a plastoquinol + NAD(+) + n H(+)(out). It catalyses the reaction a plastoquinone + NADPH + (n+1) H(+)(in) = a plastoquinol + NADP(+) + n H(+)(out). Its function is as follows. NDH-1 shuttles electrons from NAD(P)H, via FMN and iron-sulfur (Fe-S) centers, to quinones in the respiratory chain. The immediate electron acceptor for the enzyme in this species is believed to be plastoquinone. Couples the redox reaction to proton translocation (for every two electrons transferred, four hydrogen ions are translocated across the cytoplasmic membrane), and thus conserves the redox energy in a proton gradient. The sequence is that of NAD(P)H-quinone oxidoreductase chain 4 from Prochlorococcus marinus (strain MIT 9303).